The following is a 572-amino-acid chain: Phosphoenolpyruvate-protein phosphotransferase (572 aa).

The active-site Tele-phosphohistidine intermediate is histidine 191. Positions 298 and 334 each coordinate phosphoenolpyruvate. Mg(2+) is bound by residues glutamate 433 and aspartate 457. Residues 456–457 and arginine 467 contribute to the phosphoenolpyruvate site; that span reads ND. The active-site Proton donor is cysteine 504.

The protein belongs to the PEP-utilizing enzyme family. Homodimer. It depends on Mg(2+) as a cofactor.

It is found in the cytoplasm. The enzyme catalyses L-histidyl-[protein] + phosphoenolpyruvate = N(pros)-phospho-L-histidyl-[protein] + pyruvate. General (non sugar-specific) component of the phosphoenolpyruvate-dependent sugar phosphotransferase system (sugar PTS). This major carbohydrate active-transport system catalyzes the phosphorylation of incoming sugar substrates concomitantly with their translocation across the cell membrane. Enzyme I transfers the phosphoryl group from phosphoenolpyruvate (PEP) to the phosphoryl carrier protein (HPr). The polypeptide is Phosphoenolpyruvate-protein phosphotransferase (Staphylococcus aureus (strain MSSA476)).